We begin with the raw amino-acid sequence, 637 residues long: Threonine--tRNA ligase (637 aa).

In terms of domain architecture, TGS spans Met-1–Thr-61. The tract at residues Asp-242–Pro-533 is catalytic. Cys-333, His-384, and His-510 together coordinate Zn(2+).

Belongs to the class-II aminoacyl-tRNA synthetase family. In terms of assembly, homodimer. Zn(2+) is required as a cofactor.

Its subcellular location is the cytoplasm. The catalysed reaction is tRNA(Thr) + L-threonine + ATP = L-threonyl-tRNA(Thr) + AMP + diphosphate + H(+). In terms of biological role, catalyzes the attachment of threonine to tRNA(Thr) in a two-step reaction: L-threonine is first activated by ATP to form Thr-AMP and then transferred to the acceptor end of tRNA(Thr). Also edits incorrectly charged L-seryl-tRNA(Thr). This Hahella chejuensis (strain KCTC 2396) protein is Threonine--tRNA ligase.